A 522-amino-acid chain; its full sequence is Semenogelin-2 (522 aa).

Positions 1–23 (MKSIILFVLSLLLILEKQAAVMG) are cleaved as a signal peptide. 4 disordered regions span residues 26–62 (CGSK…SKGS), 132–158 (GGQA…ISSQ), 272–358 (NLNQ…ERHL), and 379–522 (EEQI…PVST). Polar residues-rich tracts occupy residues 31–40 (QLPSGSSQFP) and 137–158 (RGTQ…ISSQ). The segment covering 292 to 310 (RTEERQLNRGEKSVQKDVS) has biased composition (basic and acidic residues). Residues 325–335 (KSQNQVTIHSQ) are compositionally biased toward polar residues. The span at 336-345 (GQEHGHKENK) shows a compositional bias: basic and acidic residues. 3 stretches are compositionally biased toward polar residues: residues 379-397 (EEQI…SQAQ), 427-436 (KDVSQSSTSF), and 446-464 (SQIQ…QNAK). 2 stretches are compositionally biased toward basic and acidic residues: residues 465 to 492 (GKSD…ESSE) and 499 to 522 (TEHE…PVST).

This sequence belongs to the semenogelin family. As to quaternary structure, interacts with SERPINA5.

It is found in the secreted. Participates in the formation of a gel matrix (sperm coagulum) entrapping the accessory gland secretions and ejaculated spermatozoa. This Hylobates klossii (Kloss's gibbon) protein is Semenogelin-2 (SEMG2).